The following is a 271-amino-acid chain: Methylthioribulose-1-phosphate dehydratase (271 aa).

C123 contacts substrate. 2 residues coordinate Zn(2+): H141 and H143. Catalysis depends on E166, which acts as the Proton donor/acceptor. H231 is a Zn(2+) binding site.

It belongs to the aldolase class II family. MtnB subfamily. Zn(2+) is required as a cofactor.

The protein resides in the cytoplasm. It carries out the reaction 5-(methylsulfanyl)-D-ribulose 1-phosphate = 5-methylsulfanyl-2,3-dioxopentyl phosphate + H2O. Its pathway is amino-acid biosynthesis; L-methionine biosynthesis via salvage pathway; L-methionine from S-methyl-5-thio-alpha-D-ribose 1-phosphate: step 2/6. Functionally, catalyzes the dehydration of methylthioribulose-1-phosphate (MTRu-1-P) into 2,3-diketo-5-methylthiopentyl-1-phosphate (DK-MTP-1-P). The polypeptide is Methylthioribulose-1-phosphate dehydratase (Candida dubliniensis (strain CD36 / ATCC MYA-646 / CBS 7987 / NCPF 3949 / NRRL Y-17841) (Yeast)).